Reading from the N-terminus, the 143-residue chain is MAAPRRGRGSSTVLSSVPLQMLFYLSGTYYALYFLATLLMITYKSQVFSYPHRYLVLDLALLFLMGILEAVRLYLGTRGNLTEAERPLAASLALTAGTALLSAHFLLWQALVLWADWALSATLLALHGLEAVLQVVAIAAFTR.

The next 4 helical transmembrane spans lie at 21–41 (MLFY…LLMI), 55–75 (LVLD…RLYL), 99–119 (ALLS…DWAL), and 121–141 (ATLL…IAAF).

The protein localises to the membrane. Its subcellular location is the cell projection. It is found in the cilium. The protein is Transmembrane protein 80 of Homo sapiens (Human).